Here is a 120-residue protein sequence, read N- to C-terminus: FK506-binding protein 1B (120 aa).

The interval Met1–Asn26 is disordered. The region spanning Gly20 to Lys115 is the PPIase FKBP-type domain.

The protein belongs to the FKBP-type PPIase family. FKBP1 subfamily.

The catalysed reaction is [protein]-peptidylproline (omega=180) = [protein]-peptidylproline (omega=0). With respect to regulation, inhibited by both FK506 and rapamycin. Functionally, PPIases accelerate the folding of proteins. It catalyzes the cis-trans isomerization of proline imidic peptide bonds in oligopeptides. The polypeptide is FK506-binding protein 1B (fpr1B) (Aspergillus fumigatus (strain ATCC MYA-4609 / CBS 101355 / FGSC A1100 / Af293) (Neosartorya fumigata)).